Here is a 779-residue protein sequence, read N- to C-terminus: Anion/proton exchange transporter GEF1 (779 aa).

Over 1–75 (MPTTYVPINQ…REVIWDRAKT (75 aa)) the chain is Cytoplasmic. The helical transmembrane segment at 76-96 (FITLSSTAIVIGCIAGFLQVF) threads the bilayer. At 97-154 (TETLVNWKTGHCQRNWLLNKSFCCNGVVNEVTSTSNLLLKRQEFECEAQGLWIAWKGH) the chain is on the lumenal side. Residues 155 to 175 (VSPFIIFMLLSVLFALISTLL) traverse the membrane as a helical segment. The Cytoplasmic portion of the chain corresponds to 176–177 (VK). The helical transmembrane segment at 178–198 (YVAPMATGSGISEIKVWVSGF) threads the bilayer. Residues 199–203 (EYNKE) are Lumenal-facing. A helical membrane pass occupies residues 204–224 (FLGFLTLVIKSVALPLAISSG). Topologically, residues 225-264 (LSVGKEGPSVHYATCCGYLLTKWLLRDTLTYSSQYEYITA) are cytoplasmic. The helical transmembrane segment at 265–285 (ASGAGVAVAFGAPIGGVLFGL) threads the bilayer. The Lumenal portion of the chain corresponds to 286-296 (EEIASANRFNS). Residues 297-319 (STLWKSYYVALVAITTLKYIDPF) traverse the membrane as a helical segment. Residues 320-336 (RNGRVILFNVTYDRDWK) are Cytoplasmic-facing. Residues 337–357 (VQEIPIFIALGIFGGLYGKYI) traverse the membrane as a helical segment. Residues 358–369 (SKWNINFIHFRK) lie on the Lumenal side of the membrane. A helical transmembrane segment spans residues 370–390 (MYLSSWPVQEVLFLATLTALI). Residues 391–436 (SYFNEFLKLDMTESMGILFHECVKNDNTSTFSHRLCQLDENTHAFE) are Cytoplasmic-facing. The chain crosses the membrane as a helical span at residues 437–457 (FLKIFTSLCFATVIRALLVVV). The Lumenal portion of the chain corresponds to 458 to 465 (SYGARVPA). The helical transmembrane segment at 466-486 (GIFVPSMAVGATFGRAVSLLV) threads the bilayer. Topologically, residues 487–500 (ERFISGPSVITPGA) are cytoplasmic. Residues 501-523 (YAFLGAAATLSGITNLTLTVVVI) traverse the membrane as a helical segment. The Lumenal segment spans residues 524 to 529 (MFELTG). Residues 530-552 (AFMYIIPLMIVVAITRIILSTSG) traverse the membrane as a helical segment. Over 553 to 779 (ISGGIADQMI…FTTNRNGNVI (227 aa)) the chain is Cytoplasmic. CBS domains lie at 591–659 (MSSK…VNST) and 688–744 (MNES…YREV).

The protein belongs to the chloride channel (TC 2.A.49) family. In terms of assembly, homodimer. Interacts with GET3. In terms of processing, proteolytically processed in the secretory pathway by protease KEX2 within the first extracellular loop. However, both the N- and C-terminal products of the cleavage reaction are required for assembly of a functional channel.

The protein resides in the golgi apparatus membrane. The protein localises to the endosome membrane. It localises to the prevacuolar compartment membrane. Functionally, anion/proton exchange transporter involved in iron and copper cation homeostasis. Involved in intracellular iron metabolism during growth on fermentable and non fermentable carbon sources. Required for proper copper-loading and maturation of multicopper oxidase FET3. Important for adjusting intracellular compartment pH to more alkaline pH under iron limitation. May also transport chloride ions through the plasma membrane. The polypeptide is Anion/proton exchange transporter GEF1 (GEF1) (Saccharomyces cerevisiae (strain ATCC 204508 / S288c) (Baker's yeast)).